Consider the following 603-residue polypeptide: Protein US26 (603 aa).

Acidic residues predominate over residues 496–513 (EEEDQEEDDTSDDDDQEK). 2 disordered regions span residues 496-536 (EEED…GSLE) and 549-568 (AVAE…DTAQ). Polar residues predominate over residues 517–533 (NPQNNIGSLTRTPSSPG).

It belongs to the herpesviridae US22 family.

The polypeptide is Protein US26 (US26) (Human cytomegalovirus (strain Merlin) (HHV-5)).